A 601-amino-acid polypeptide reads, in one-letter code: Elongation factor 4 (601 aa).

The 183-residue stretch at 6 to 188 folds into the tr-type G domain; that stretch reads SHIRNFSIIA…QIVHRVPAPE (183 aa). Residues 18 to 23 and 135 to 138 contribute to the GTP site; these read DHGKST and NKID.

This sequence belongs to the TRAFAC class translation factor GTPase superfamily. Classic translation factor GTPase family. LepA subfamily.

It localises to the cell inner membrane. It catalyses the reaction GTP + H2O = GDP + phosphate + H(+). Its function is as follows. Required for accurate and efficient protein synthesis under certain stress conditions. May act as a fidelity factor of the translation reaction, by catalyzing a one-codon backward translocation of tRNAs on improperly translocated ribosomes. Back-translocation proceeds from a post-translocation (POST) complex to a pre-translocation (PRE) complex, thus giving elongation factor G a second chance to translocate the tRNAs correctly. Binds to ribosomes in a GTP-dependent manner. This chain is Elongation factor 4, found in Anaeromyxobacter dehalogenans (strain 2CP-1 / ATCC BAA-258).